A 415-amino-acid polypeptide reads, in one-letter code: MESCARRCAVSGLTALSMRLTKQLSAAAASKAGAAGNLVFSPLSIYSVLSVVTAGARGRTLTELLGALGAESREKLAANAGEMARALPAPGGGAAQPGGGPRVAHACGVWHERTRTVRPAFRDAAAASFNAAALAVDFLNNPEEARKEINSWVAAATENLIDTILPPGSVSTDTGLVVTSAIYFNGQWWTPFCKEITEKRAFHRLDGGDVEADFMRSGEDQYIAVHDGFKVLKMPYAACVSARTTTTPRYSMYVFLPDERDGLWSLEDRMAAGGEGFLREHTPERRVEVGEFRIPRFKLSFDDSVVGALQRLGVRDVFKPFVADLADVLEAENSGDDPPLFVSDVKHKAVIEVNEEGTEAAAATAVCLTFASAAPSSRRPARVDFVADHPFAFLVLEESSGAVLFAGHVVDPTDE.

The tract at residues G357–A381 is RCL.

This sequence belongs to the serpin family.

In terms of biological role, probable serine protease inhibitor. This Oryza sativa subsp. japonica (Rice) protein is Putative serpin-Z6C.